Reading from the N-terminus, the 208-residue chain is Outer-membrane lipoprotein carrier protein (208 aa).

The first 22 residues, 1 to 22 (MKKIFAIAALSLPLFSHFPAFA), serve as a signal peptide directing secretion.

It belongs to the LolA family. As to quaternary structure, monomer.

Its subcellular location is the periplasm. In terms of biological role, participates in the translocation of lipoproteins from the inner membrane to the outer membrane. Only forms a complex with a lipoprotein if the residue after the N-terminal Cys is not an aspartate (The Asp acts as a targeting signal to indicate that the lipoprotein should stay in the inner membrane). This is Outer-membrane lipoprotein carrier protein from Shewanella halifaxensis (strain HAW-EB4).